Here is a 558-residue protein sequence, read N- to C-terminus: Dihydroxy-acid dehydratase (558 aa).

A Mg(2+)-binding site is contributed by D81. C122 contributes to the [2Fe-2S] cluster binding site. Positions 123 and 124 each coordinate Mg(2+). K124 carries the N6-carboxylysine modification. [2Fe-2S] cluster is bound at residue C195. Residue E447 coordinates Mg(2+). Catalysis depends on S473, which acts as the Proton acceptor.

This sequence belongs to the IlvD/Edd family. Homodimer. The cofactor is [2Fe-2S] cluster. Mg(2+) serves as cofactor.

It carries out the reaction (2R)-2,3-dihydroxy-3-methylbutanoate = 3-methyl-2-oxobutanoate + H2O. The enzyme catalyses (2R,3R)-2,3-dihydroxy-3-methylpentanoate = (S)-3-methyl-2-oxopentanoate + H2O. The protein operates within amino-acid biosynthesis; L-isoleucine biosynthesis; L-isoleucine from 2-oxobutanoate: step 3/4. It participates in amino-acid biosynthesis; L-valine biosynthesis; L-valine from pyruvate: step 3/4. Its function is as follows. Functions in the biosynthesis of branched-chain amino acids. Catalyzes the dehydration of (2R,3R)-2,3-dihydroxy-3-methylpentanoate (2,3-dihydroxy-3-methylvalerate) into 2-oxo-3-methylpentanoate (2-oxo-3-methylvalerate) and of (2R)-2,3-dihydroxy-3-methylbutanoate (2,3-dihydroxyisovalerate) into 2-oxo-3-methylbutanoate (2-oxoisovalerate), the penultimate precursor to L-isoleucine and L-valine, respectively. In Bacillus subtilis (strain 168), this protein is Dihydroxy-acid dehydratase.